The following is a 148-amino-acid chain: Hemoglobin subunit alpha (148 aa).

An N-acetylserine modification is found at S1. Residues 8-148 (DYSAADRAEL…VCHELSSRYR (141 aa)) enclose the Globin domain. Residue H66 coordinates O2. H95 is a binding site for heme b.

This sequence belongs to the globin family. In terms of assembly, heterotetramer of two alpha chains and two beta chains. Red blood cells.

Its function is as follows. Involved in oxygen transport from the lung to the various peripheral tissues. This chain is Hemoglobin subunit alpha (HBA), found in Heterodontus portusjacksoni (Port Jackson shark).